The following is a 272-amino-acid chain: Alcohol dehydrogenase-related 31 kDa protein (272 aa).

Residue 11 to 34 (YVADCGGIALETSKVLMTKNIAKL) participates in NAD(+) binding. Position 139 (Ser-139) interacts with substrate. The active-site Proton acceptor is the Tyr-152.

It belongs to the short-chain dehydrogenases/reductases (SDR) family.

This is Alcohol dehydrogenase-related 31 kDa protein (Adhr) from Drosophila melanogaster (Fruit fly).